The chain runs to 223 residues: Phosphoribosylformylglycinamidine synthase subunit PurQ (223 aa).

Residues 2–223 form the Glutamine amidotransferase type-1 domain; sequence KTAIIQLPGL…FQSALELAKG (222 aa). Cys86 functions as the Nucleophile in the catalytic mechanism. Residues His196 and Glu198 contribute to the active site.

In terms of assembly, part of the FGAM synthase complex composed of 1 PurL, 1 PurQ and 2 PurS subunits.

The protein resides in the cytoplasm. It catalyses the reaction N(2)-formyl-N(1)-(5-phospho-beta-D-ribosyl)glycinamide + L-glutamine + ATP + H2O = 2-formamido-N(1)-(5-O-phospho-beta-D-ribosyl)acetamidine + L-glutamate + ADP + phosphate + H(+). The enzyme catalyses L-glutamine + H2O = L-glutamate + NH4(+). It functions in the pathway purine metabolism; IMP biosynthesis via de novo pathway; 5-amino-1-(5-phospho-D-ribosyl)imidazole from N(2)-formyl-N(1)-(5-phospho-D-ribosyl)glycinamide: step 1/2. Its function is as follows. Part of the phosphoribosylformylglycinamidine synthase complex involved in the purines biosynthetic pathway. Catalyzes the ATP-dependent conversion of formylglycinamide ribonucleotide (FGAR) and glutamine to yield formylglycinamidine ribonucleotide (FGAM) and glutamate. The FGAM synthase complex is composed of three subunits. PurQ produces an ammonia molecule by converting glutamine to glutamate. PurL transfers the ammonia molecule to FGAR to form FGAM in an ATP-dependent manner. PurS interacts with PurQ and PurL and is thought to assist in the transfer of the ammonia molecule from PurQ to PurL. The polypeptide is Phosphoribosylformylglycinamidine synthase subunit PurQ (Bartonella henselae (strain ATCC 49882 / DSM 28221 / CCUG 30454 / Houston 1) (Rochalimaea henselae)).